A 145-amino-acid polypeptide reads, in one-letter code: D-aminoacyl-tRNA deacylase (145 aa).

The short motif at 137–138 (GP) is the Gly-cisPro motif, important for rejection of L-amino acids element.

Belongs to the DTD family. As to quaternary structure, homodimer.

The protein resides in the cytoplasm. It catalyses the reaction glycyl-tRNA(Ala) + H2O = tRNA(Ala) + glycine + H(+). It carries out the reaction a D-aminoacyl-tRNA + H2O = a tRNA + a D-alpha-amino acid + H(+). Its function is as follows. An aminoacyl-tRNA editing enzyme that deacylates mischarged D-aminoacyl-tRNAs. Also deacylates mischarged glycyl-tRNA(Ala), protecting cells against glycine mischarging by AlaRS. Acts via tRNA-based rather than protein-based catalysis; rejects L-amino acids rather than detecting D-amino acids in the active site. By recycling D-aminoacyl-tRNA to D-amino acids and free tRNA molecules, this enzyme counteracts the toxicity associated with the formation of D-aminoacyl-tRNA entities in vivo and helps enforce protein L-homochirality. The protein is D-aminoacyl-tRNA deacylase of Shewanella sediminis (strain HAW-EB3).